Reading from the N-terminus, the 523-residue chain is MAAALQVLRHLARAPSGPLLWGGPLARMASSMALAEQARQLFESTVGAVLPGPLLQRALSLDPDSGELKVRDRSFQLRQNLYLVGFGKAVLGMAAAAEELLGQHLVQGVISVPKGIRAAMEHAGKQEMLLKPHSRIQVFEGAEDNLPDRDALRAALAIRQLAEGLTADDLLLVLISGGGSALLPAPIPPVTLEEKQTLTKLLAARGATIQELNTIRKALSQLKGGGLAQAAYPAQVVSLILSDVVGDPVEVIASGPTVASIHSVQDCLYILNRYGLRTALPRSVKTVLARADSDPHGPHTCGHVLNVILGSNALALAEAQKQAEALGYRAVVLSTAIQGDVKSVAQFYGLLARVAGAHLALPGAGASVQEDERLYELAADLQLPDLQLKEALEAVVGAPGPVCLLAGGEPTVRLQGSGKGGRNQELALRVGVELGQWPLGTVDVLFLSGGTDGQDGPTEAAGAWVRPELTSQAAAEGLDVATFLAHNDSHTFFCRFQGGAHLLHTGLTGTNVTDAHFLFLHPQ.

Ser-60 bears the Phosphoserine mark. Lys-200 is modified (N6-acetyllysine).

It belongs to the glycerate kinase type-2 family.

It localises to the cytoplasm. It carries out the reaction (R)-glycerate + ATP = (2R)-3-phosphoglycerate + ADP + H(+). This Bos taurus (Bovine) protein is Glycerate kinase (GLYCTK).